Consider the following 30-residue polypeptide: GTHPCQETCVTSTRCSTQGCHCNWPICFKN.

Positions 1-30 (GTHPCQETCVTSTRCSTQGCHCNWPICFKN) form a cross-link, cyclopeptide (Gly-Asn). 3 disulfide bridges follow: cysteine 5-cysteine 20, cysteine 9-cysteine 22, and cysteine 15-cysteine 27.

Post-translationally, this is a cyclic peptide. Detected in stems (at protein level).

In terms of biological role, probably participates in a plant defense mechanism. Does not display any cytotoxic activity towards K562, HeLa, MCF-7, HUVEC or red blood cells. Does not bind to phospholipd membranes containing 1-palmitoyl 2-oleoyl phosphatidylcholine (POPC) or 1-palmitoyl-2-oleophosphatidylethanolamine (POPE). The polypeptide is Cyclotide hyen-C (Pigea enneasperma (Spade flower)).